A 239-amino-acid polypeptide reads, in one-letter code: 1-(5-phosphoribosyl)-5-[(5-phosphoribosylamino)methylideneamino] imidazole-4-carboxamide isomerase (239 aa).

The active-site Proton acceptor is the D8. D129 serves as the catalytic Proton donor.

This sequence belongs to the HisA/HisF family.

Its subcellular location is the cytoplasm. The enzyme catalyses 1-(5-phospho-beta-D-ribosyl)-5-[(5-phospho-beta-D-ribosylamino)methylideneamino]imidazole-4-carboxamide = 5-[(5-phospho-1-deoxy-D-ribulos-1-ylimino)methylamino]-1-(5-phospho-beta-D-ribosyl)imidazole-4-carboxamide. Its pathway is amino-acid biosynthesis; L-histidine biosynthesis; L-histidine from 5-phospho-alpha-D-ribose 1-diphosphate: step 4/9. The polypeptide is 1-(5-phosphoribosyl)-5-[(5-phosphoribosylamino)methylideneamino] imidazole-4-carboxamide isomerase (Bacillus cereus (strain G9842)).